Here is a 129-residue protein sequence, read N- to C-terminus: MAKTPVRARKRVKKQVVDGVRHIHASFNNTIVTITDRQGNALAWATAGGSGFRGSRKSTPFAAQVAAERCAEIVKEFGLKNLEVMVKGPGPGRESTIRALNAAGFRITNITDVTPIPHNGCRPPKKRRV.

The protein belongs to the universal ribosomal protein uS11 family. Part of the 30S ribosomal subunit. Interacts with proteins S7 and S18. Binds to IF-3.

In terms of biological role, located on the platform of the 30S subunit, it bridges several disparate RNA helices of the 16S rRNA. Forms part of the Shine-Dalgarno cleft in the 70S ribosome. The polypeptide is Small ribosomal subunit protein uS11 (Haemophilus influenzae (strain ATCC 51907 / DSM 11121 / KW20 / Rd)).